The chain runs to 527 residues: Glutamyl-tRNA reductase 1, chloroplastic (527 aa).

The N-terminal 43 residues, 1-43, are a transit peptide targeting the chloroplast; that stretch reads MAGATSATAAAGAFAAAKARGPAAACPWLVAAGGRRRSGVVRC. Substrate contacts are provided by residues 124–127, S184, 189–191, and Q195; these read TCNR and EGQ. C125 functions as the Nucleophile in the catalytic mechanism. 266 to 271 is an NADP(+) binding site; sequence GAGKMG.

It belongs to the glutamyl-tRNA reductase family. Homodimer.

The protein resides in the plastid. It localises to the chloroplast. It catalyses the reaction (S)-4-amino-5-oxopentanoate + tRNA(Glu) + NADP(+) = L-glutamyl-tRNA(Glu) + NADPH + H(+). It participates in porphyrin-containing compound metabolism; protoporphyrin-IX biosynthesis; 5-aminolevulinate from L-glutamyl-tRNA(Glu): step 1/2. Catalyzes the NADPH-dependent reduction of glutamyl-tRNA(Glu) to glutamate 1-semialdehyde (GSA). The sequence is that of Glutamyl-tRNA reductase 1, chloroplastic (HEMA1) from Hordeum vulgare (Barley).